The chain runs to 181 residues: Acireductone dioxygenase (181 aa).

Positions 97, 99, 103, and 141 each coordinate Fe(2+). Ni(2+)-binding residues include His-97, His-99, Glu-103, and His-141.

It belongs to the acireductone dioxygenase (ARD) family. In terms of assembly, monomer. Requires Fe(2+) as cofactor. The cofactor is Ni(2+).

The enzyme catalyses 1,2-dihydroxy-5-(methylsulfanyl)pent-1-en-3-one + O2 = 3-(methylsulfanyl)propanoate + CO + formate + 2 H(+). It carries out the reaction 1,2-dihydroxy-5-(methylsulfanyl)pent-1-en-3-one + O2 = 4-methylsulfanyl-2-oxobutanoate + formate + 2 H(+). It participates in amino-acid biosynthesis; L-methionine biosynthesis via salvage pathway; L-methionine from S-methyl-5-thio-alpha-D-ribose 1-phosphate: step 5/6. In terms of biological role, catalyzes 2 different reactions between oxygen and the acireductone 1,2-dihydroxy-3-keto-5-methylthiopentene (DHK-MTPene) depending upon the metal bound in the active site. Fe-containing acireductone dioxygenase (Fe-ARD) produces formate and 2-keto-4-methylthiobutyrate (KMTB), the alpha-ketoacid precursor of methionine in the methionine recycle pathway. Ni-containing acireductone dioxygenase (Ni-ARD) produces methylthiopropionate, carbon monoxide and formate, and does not lie on the methionine recycle pathway. The chain is Acireductone dioxygenase from Stutzerimonas stutzeri (strain A1501) (Pseudomonas stutzeri).